The following is a 534-amino-acid chain: MSEVANEASRRRTFAIISHPDAGKTTLTEKLLLFGGAIQMAGSVKGRKAARHATSDWMALEKERGISVTSSVMQFPYEGKIVNLLDTPGHADFGEDTYRVLTAVDSALMVIDVAKGVEERTIKLMEVCRLRDTPIMTFINKLDREGKDPIELLDEVETVLGIQCAPVTWPIGMGQRLKGVVHLLTGEVHLYEPGRNFTRQDSTIFPSIDAPGLAEKIGAQMLAELRDELDLVQGASHPFDLDAYRAGKQTPVFFGSGVNNFGVQPLLDFFVEHAPPPQARTTTGRVIAPEENKLTGFVFKIQANMDPQHRDRVAFMRICSGRFSAGMKTFHVRTGKDMKLANALTFMASDREIAAEAWPGDVIGIHNHGTISIGDTFTEGEAVTFTGIPNFAPELFRRARLRDPLKLKQLQKGLAQLSEEGATQFFRPLTSNDLILGAVGVLQFDVAAYRLKDEYGVEATFEQVSVSTARWVHCSNEKKLEEFREKNALNLALDAAGHLVYLAPTRVNLQLAQERSPDVRFSATREAAHTVSVG.

In terms of domain architecture, tr-type G spans 9 to 278; sequence SRRRTFAIIS…FFVEHAPPPQ (270 aa). GTP-binding positions include 18 to 25, 86 to 90, and 140 to 143; these read SHPDAGKT, DTPGH, and NKLD.

This sequence belongs to the TRAFAC class translation factor GTPase superfamily. Classic translation factor GTPase family. PrfC subfamily.

It localises to the cytoplasm. Functionally, increases the formation of ribosomal termination complexes and stimulates activities of RF-1 and RF-2. It binds guanine nucleotides and has strong preference for UGA stop codons. It may interact directly with the ribosome. The stimulation of RF-1 and RF-2 is significantly reduced by GTP and GDP, but not by GMP. The protein is Peptide chain release factor 3 of Stenotrophomonas maltophilia (strain R551-3).